The sequence spans 212 residues: Riboflavin kinase (212 aa).

Positions 1–87 are H-T-H motif-like; the sequence is MKKSNLDLLI…HEELSDALYR (87 aa). The tract at residues 88–212 is riboflavin kinase; sequence GIIIGEVVSG…DGDRIRIKTL (125 aa). 97 to 102 provides a ligand contact to CDP; that stretch reads GIGEGA. 2 residues coordinate Mg(2+): threonine 124 and asparagine 126. Positions 180 and 188 each coordinate FMN. Residue 193–196 participates in CDP binding; the sequence is VNLR.

It belongs to the archaeal riboflavin kinase family. The cofactor is Mg(2+).

It catalyses the reaction riboflavin + CTP = CDP + FMN + H(+). It functions in the pathway cofactor biosynthesis; FMN biosynthesis; FMN from riboflavin (CTP route): step 1/1. Functionally, catalyzes the CTP-dependent phosphorylation of riboflavin (vitamin B2) to form flavin mononucleotide (FMN). The sequence is that of Riboflavin kinase (ribK) from Pyrococcus furiosus (strain ATCC 43587 / DSM 3638 / JCM 8422 / Vc1).